We begin with the raw amino-acid sequence, 222 residues long: MALFGFGKKLALPTPEKALPGRAQIMPVPANHYVNKNPLKPPFPDGFEKALFGLGCFWGAERKFWQQQGVYSTAVGYAAGFTPNPTYDEVCTGLTGHNEVVLVVFDPKVISYTQLLKVFWESHNPTQGMRQGNDVGTQYRSGIYVYSEAQKQLAEASRDAYQQALSSAGYEKITTEILDAPEFYYAEAYHQQYLAKNPNGYCGLGGTNVACPVGVFESSANG.

C56 is a catalytic residue.

This sequence belongs to the MsrA Met sulfoxide reductase family.

The enzyme catalyses L-methionyl-[protein] + [thioredoxin]-disulfide + H2O = L-methionyl-(S)-S-oxide-[protein] + [thioredoxin]-dithiol. It catalyses the reaction [thioredoxin]-disulfide + L-methionine + H2O = L-methionine (S)-S-oxide + [thioredoxin]-dithiol. Functionally, has an important function as a repair enzyme for proteins that have been inactivated by oxidation. Catalyzes the reversible oxidation-reduction of methionine sulfoxide in proteins to methionine. The protein is Peptide methionine sulfoxide reductase MsrA 2 (msrA2) of Nostoc sp. (strain PCC 7120 / SAG 25.82 / UTEX 2576).